We begin with the raw amino-acid sequence, 272 residues long: HMP-PP phosphatase (272 aa).

Asp-8 functions as the Nucleophile in the catalytic mechanism. The Mg(2+) site is built by Asp-8, Asp-10, and Asp-212.

This sequence belongs to the HAD-like hydrolase superfamily. Cof family. Requires Mg(2+) as cofactor.

It carries out the reaction 4-amino-2-methyl-5-(diphosphooxymethyl)pyrimidine + H2O = 4-amino-2-methyl-5-(phosphooxymethyl)pyrimidine + phosphate + H(+). In terms of biological role, catalyzes the hydrolysis of 4-amino-2-methyl-5-hydroxymethylpyrimidine pyrophosphate (HMP-PP) to 4-amino-2-methyl-5-hydroxymethylpyrimidine phosphate (HMP-P). The chain is HMP-PP phosphatase from Salmonella choleraesuis (strain SC-B67).